Here is a 1341-residue protein sequence, read N- to C-terminus: Aldehyde oxidase 4 (1341 aa).

Residues 8–95 (DELIFFVNGK…GAAVTTVEGV (88 aa)) enclose the 2Fe-2S ferredoxin-type domain. [2Fe-2S] cluster-binding residues include Cys47, Cys52, Cys55, and Cys77. Gln116 contacts Mo-molybdopterin. Cys117, Cys120, Cys152, and Cys154 together coordinate [2Fe-2S] cluster. Cys154 lines the Mo-molybdopterin pocket. Positions 239–424 (FQGERTTWLA…LSVFIPYSSQ (186 aa)) constitute an FAD-binding PCMH-type domain. Residues 267–274 (LIMGNTTV), Ala348, Thr357, His361, Asp370, and Val414 contribute to the FAD site. Mo-molybdopterin is bound by residues Ala805, 805-806 (AF), Leu1046, 1087-1090 (GSMG), Gln1202, and Leu1266. The Proton acceptor; for azaheterocycle hydroxylase activity role is filled by Glu1268.

Belongs to the xanthine dehydrogenase family. In terms of assembly, homodimer. Requires [2Fe-2S] cluster as cofactor. The cofactor is FAD. Mo-molybdopterin is required as a cofactor. Detected in liver, testis, kidney, brain, Harderian gland and olfactory mucosa.

The protein resides in the cytoplasm. It carries out the reaction an aldehyde + O2 + H2O = a carboxylate + H2O2 + H(+). The catalysed reaction is retinal + O2 + H2O = retinoate + H2O2 + H(+). Its function is as follows. Aldehyde oxidase able to catalyze the oxidation of retinaldehyde into retinoate. Acts as a negative modulator of the epidermal trophism. May be able to oxidize a wide variety of aldehydes into their corresponding carboxylates and to hydroxylate azaheterocycles. The sequence is that of Aldehyde oxidase 4 (AOX4) from Cavia porcellus (Guinea pig).